The sequence spans 929 residues: LPS-assembly protein LptD (929 aa).

The N-terminal stretch at 1-33 is a signal peptide; the sequence is MAVKSLVFRRKFPLLVTGSLLALQPVAALTVQA. The segment at 58–101 is disordered; that stretch reads NLPPRPAHTATSVSTAAAGSSVSGSGGETVEAEPTQRLVTESGG. A compositionally biased stretch (low complexity) spans 66–90; the sequence is TATSVSTAAAGSSVSGSGGETVEAE.

Belongs to the LptD family. Component of the lipopolysaccharide transport and assembly complex. Interacts with LptE and LptA.

Its subcellular location is the cell outer membrane. In terms of biological role, together with LptE, is involved in the assembly of lipopolysaccharide (LPS) at the surface of the outer membrane. The sequence is that of LPS-assembly protein LptD from Pseudomonas aeruginosa (strain LESB58).